Here is a 681-residue protein sequence, read N- to C-terminus: Macrolide export ATP-binding/permease protein MacB (681 aa).

The ABC transporter domain occupies leucine 6 to alanine 244. Glycine 42–serine 49 provides a ligand contact to ATP. Positions threonine 246–proline 273 are enriched in low complexity. A disordered region spans residues threonine 246 to serine 298. Residues alanine 274 to alanine 285 show a composition bias toward pro residues. The next 4 helical transmembrane spans lie at cysteine 306 to glycine 326, leucine 554 to methionine 574, leucine 611 to phenylalanine 631, and alanine 644 to methionine 664.

The protein belongs to the ABC transporter superfamily. Macrolide exporter (TC 3.A.1.122) family. Homodimer.

It is found in the cell inner membrane. Non-canonical ABC transporter that contains transmembrane domains (TMD), which form a pore in the inner membrane, and an ATP-binding domain (NBD), which is responsible for energy generation. Confers resistance against macrolides. This is Macrolide export ATP-binding/permease protein MacB from Burkholderia orbicola (strain AU 1054).